We begin with the raw amino-acid sequence, 452 residues long: Probable intron-encoded endonuclease 2 (452 aa).

A run of 3 helical transmembrane segments spans residues Met1 to Asn21, Ile22 to Val42, and Ile57 to Phe77. The segment at Met1–Leu80 is ndh-4L exon 1 encoded. Positions Ile81 to Ile452 are ndh-4L intron 1 encoded.

The protein in the N-terminal section; belongs to the complex I subunit 4L family. It in the C-terminal section; belongs to the LAGLIDADG endonuclease family.

Its subcellular location is the mitochondrion membrane. In terms of biological role, mitochondrial DNA endonuclease involved in intron homing. This is Probable intron-encoded endonuclease 2 from Neurospora crassa (strain ATCC 24698 / 74-OR23-1A / CBS 708.71 / DSM 1257 / FGSC 987).